The sequence spans 211 residues: Arginine exporter protein ArgO (211 aa).

The next 6 membrane-spanning stretches (helical) occupy residues 1-21 (MFTY…PLGP), 37-57 (LMIA…GIFG), 68-88 (LLAI…FGAL), 111-131 (IIIT…DTFV), 147-167 (WFAL…ALLA), and 182-202 (IINI…AKEG).

This sequence belongs to the LysE/ArgO transporter (TC 2.A.75) family.

It localises to the cell inner membrane. The enzyme catalyses L-arginine(in) = L-arginine(out). Functionally, involved in the export of arginine. Important to control the intracellular level of arginine and the correct balance between arginine and lysine. This is Arginine exporter protein ArgO from Klebsiella pneumoniae (strain 342).